A 64-amino-acid chain; its full sequence is Beta-defensin 1 (64 aa).

Residues 1–20 (MRLHHLLLVLFFLVLSAGSG) form the signal peptide. A propeptide spanning residues 21 to 26 (FTQGIR) is cleaved from the precursor. 3 cysteine pairs are disulfide-bonded: Cys31/Cys60, Cys38/Cys53, and Cys43/Cys61.

It belongs to the beta-defensin family. In terms of assembly, monomer. Homodimer.

It is found in the secreted. Its subcellular location is the membrane. Has bactericidal activity. May act as a ligand for C-C chemokine receptor CCR6. Positively regulates the sperm motility and bactericidal activity in a CCR6-dependent manner. Binds to CCR6 and triggers Ca2+ mobilization in the sperm which is important for its motility. The chain is Beta-defensin 1 (DEFB1) from Capra hircus (Goat).